The chain runs to 299 residues: Pyridoxal 5'-phosphate synthase subunit PdxS (299 aa).

D24 contacts D-ribose 5-phosphate. Catalysis depends on K81, which acts as the Schiff-base intermediate with D-ribose 5-phosphate. Residue G153 participates in D-ribose 5-phosphate binding. Position 165 (R165) interacts with D-glyceraldehyde 3-phosphate. Residues G219 and 240–241 each bind D-ribose 5-phosphate; that span reads GS.

It belongs to the PdxS/SNZ family. In terms of assembly, in the presence of PdxT, forms a dodecamer of heterodimers.

The enzyme catalyses aldehydo-D-ribose 5-phosphate + D-glyceraldehyde 3-phosphate + L-glutamine = pyridoxal 5'-phosphate + L-glutamate + phosphate + 3 H2O + H(+). The protein operates within cofactor biosynthesis; pyridoxal 5'-phosphate biosynthesis. Its function is as follows. Catalyzes the formation of pyridoxal 5'-phosphate from ribose 5-phosphate (RBP), glyceraldehyde 3-phosphate (G3P) and ammonia. The ammonia is provided by the PdxT subunit. Can also use ribulose 5-phosphate and dihydroxyacetone phosphate as substrates, resulting from enzyme-catalyzed isomerization of RBP and G3P, respectively. The chain is Pyridoxal 5'-phosphate synthase subunit PdxS from Methanococcus maripaludis (strain C5 / ATCC BAA-1333).